Reading from the N-terminus, the 172-residue chain is Protein-export protein SecB (172 aa).

The segment at 153–172 (AQGQGGDSGIVMPDGSQARH) is disordered.

Belongs to the SecB family. In terms of assembly, homotetramer, a dimer of dimers. One homotetramer interacts with 1 SecA dimer.

It localises to the cytoplasm. One of the proteins required for the normal export of preproteins out of the cell cytoplasm. It is a molecular chaperone that binds to a subset of precursor proteins, maintaining them in a translocation-competent state. It also specifically binds to its receptor SecA. This chain is Protein-export protein SecB, found in Cupriavidus metallidurans (strain ATCC 43123 / DSM 2839 / NBRC 102507 / CH34) (Ralstonia metallidurans).